A 964-amino-acid chain; its full sequence is MVLTNVKQFASEMNLTPERLLEQLRAAGVSKRSPEDSLSAQDKSQLLDYLKRSHGAREDSGITLTRKSTSEVKKADGSTVTVETRKKRVVVRPDDAPRAEAPKPAEPAPAPAAAPAEAKPEPKPEPKVEAKPEPKPEPKPEPKVEAKPEPKPEPKPAAAPAPRTVASILSPEEIAAREAEEKRQAAFRARQEALMREKIEREERRQAAKLAASQPAPEPAPVVEPQREERRDDRRGAPSGDNRGPRGNDNRGPRPAGAGDRGPRPGGDNRGPRPAGAGDRGPRPGGDNRGPRPAGAGDRGPRPAPAAAAPSQPPAPAPGGSRPGKGKKGGERSWDDNKKGGRGLKTKGGDAGNDWKSRGGKGRNKQNNQHAFQAPTEPIVHEVLVPETITVAELAHKMAVKAVEVIKTLMKMGMMVTINQVLDQETALIVVEEMGHIGKAAQADDPEAYLDVTDGETVEVVEQPRSPVVTVMGHVDHGKTSLLDYIRRAKVAAGEAGGITQHIGAYHVETPRGMITFLDTPGHEAFTAMRARGAKATDIVVLVVAADDGVMPQTIEAIHHAKAAKVPMVVAVNKIDKQGANVERIRQELVAHEVVPEDWGGDTQFVEVSAKMGLNIDALLEAILLQAEVLELKAPVDSLAKGIIVEARLDKGRGPVATLLVQSGTLKKGDVVLAGTAFGRVRAMMDENGKAIDSAGPAIPVEILGLSDVPQAGEDAMALADEKKAREIALFRAGKFRDVRLAKQQAAKLENMFAQMAEGEVQTLSIIIKADVQGSYEALAGSLQKLSTEEVRVAILHSGVGGISESDVNLAIASKAIVIGFNTRADAAARKLAENEGVDIRYYNIIYDAVDEVKAALSGMLAPEKKEQILGTVEIRQVITVSKVGNIAGCMVTDGMIKRSASIRLIRNHVVIHTGELESLKRFKDDVKEVKQGYECGLMLKNFNDIQEGDQLEAFEIVEVARSL.

Residues Ala26–Pro375 form a disordered region. 7 stretches are compositionally biased toward basic and acidic residues: residues Tyr49 to Ser60, Val91 to Lys103, Ala118 to Pro154, Ile174 to Gln206, Pro225 to Gly236, Arg243 to Gly252, and Lys328 to Lys339. Residues Pro464–Lys633 form the tr-type G domain. The segment at Gly473–Thr480 is G1. A GTP-binding site is contributed by Gly473–Thr480. The tract at residues Gly498–His502 is G2. Residues Asp519–Gly522 form a G3 region. Residues Asp519–His523 and Asn573–Asp576 contribute to the GTP site. The interval Asn573 to Asp576 is G4. Residues Ser609–Lys611 are G5.

Belongs to the TRAFAC class translation factor GTPase superfamily. Classic translation factor GTPase family. IF-2 subfamily.

The protein resides in the cytoplasm. Functionally, one of the essential components for the initiation of protein synthesis. Protects formylmethionyl-tRNA from spontaneous hydrolysis and promotes its binding to the 30S ribosomal subunits. Also involved in the hydrolysis of GTP during the formation of the 70S ribosomal complex. The chain is Translation initiation factor IF-2 from Chromobacterium violaceum (strain ATCC 12472 / DSM 30191 / JCM 1249 / CCUG 213 / NBRC 12614 / NCIMB 9131 / NCTC 9757 / MK).